Consider the following 282-residue polypeptide: Phosphatidylglycerol--prolipoprotein diacylglyceryl transferase (282 aa).

The next 3 membrane-spanning stretches (helical) occupy residues 18–38, 56–76, and 89–109; these read IQVH…VALA, ILWA…IFQW, and IWDG…VVIL. Residue arginine 137 participates in a 1,2-diacyl-sn-glycero-3-phospho-(1'-sn-glycerol) binding. Residues 237 to 257 traverse the membrane as a helical segment; sequence VIRVSQALSVVLFFGSIGLMI.

It belongs to the Lgt family.

It is found in the cell membrane. The catalysed reaction is L-cysteinyl-[prolipoprotein] + a 1,2-diacyl-sn-glycero-3-phospho-(1'-sn-glycerol) = an S-1,2-diacyl-sn-glyceryl-L-cysteinyl-[prolipoprotein] + sn-glycerol 1-phosphate + H(+). The protein operates within protein modification; lipoprotein biosynthesis (diacylglyceryl transfer). Its function is as follows. Catalyzes the transfer of the diacylglyceryl group from phosphatidylglycerol to the sulfhydryl group of the N-terminal cysteine of a prolipoprotein, the first step in the formation of mature lipoproteins. The polypeptide is Phosphatidylglycerol--prolipoprotein diacylglyceryl transferase (Lactiplantibacillus plantarum (strain ATCC BAA-793 / NCIMB 8826 / WCFS1) (Lactobacillus plantarum)).